Consider the following 757-residue polypeptide: Xylosyl- and glucuronyltransferase LARGE1 (757 aa).

Over 1–10 (MLGMCRGRRK) the chain is Cytoplasmic. Residues 11-31 (FVAASLALIFIPALTWLYLSS) form a helical; Signal-anchor for type II membrane protein membrane-spanning segment. The Lumenal segment spans residues 32-757 (ANITVKPLPL…LKYMTVDNNS (726 aa)). Positions 50–82 (AVVGAAAEHQSLELRLRDVEEHNNALRREISRT) form a coiled coil. Residues 76–127 (RREISRTPRVPTHSSHPSSSRHGNQLHTHSTEEGTGDSEAKKGAAAGNSSDC) form a disordered region. The segment covering 82–97 (TPRVPTHSSHPSSSRH) has biased composition (low complexity). 2 N-linked (GlcNAc...) asparagine glycosylation sites follow: N123 and N149. Residues 139–414 (IHIAIVCAGY…FLEYDGNLLR (276 aa)) form a xylosyltransferase activity region. 2 residues coordinate Mn(2+): D243 and D245. An N-linked (GlcNAc...) asparagine glycan is attached at N273. The tract at residues 415–757 (RELFGCPSET…LKYMTVDNNS (343 aa)) is glucuronyltransferase activity. Mn(2+) contacts are provided by D564 and D566. A glycan (N-linked (GlcNAc...) asparagine) is linked at N738.

The protein in the C-terminal section; belongs to the glycosyltransferase 49 family. It in the N-terminal section; belongs to the glycosyltransferase 8 family. The cofactor is Mn(2+).

Its subcellular location is the golgi apparatus membrane. It catalyses the reaction 3-O-[beta-D-GlcA-(1-&gt;3)-beta-D-Xyl-(1-&gt;4)-Rib-ol-P-Rib-ol-P-3-beta-D-GalNAc-(1-&gt;3)-beta-D-GlcNAc-(1-&gt;4)-(O-6-P-alpha-D-Man)]-Thr-[protein] + UDP-alpha-D-xylose = 3-O-[alpha-D-Xyl-(1-&gt;3)-beta-D-GlcA-(1-&gt;4)-beta-D-Xyl-(1-&gt;4)-Rib-ol-P-Rib-ol-P-3-beta-D-GalNAc-(1-&gt;3)-beta-D-GlcNAc-(1-&gt;4)-(O-6-P-alpha-D-Man)]-Thr-[protein] + UDP + H(+). The catalysed reaction is 3-O-{(1-&gt;[3)-alpha-D-Xyl-(1-&gt;3)-beta-D-GlcA-(1-&gt;](n)-4)-beta-D-Xyl-(1-&gt;4)-Rib-ol-P-Rib-ol-P-3-beta-D-GalNAc-(1-&gt;3)-beta-D-GlcNAc-(1-&gt;4)-O-6-P-alpha-D-Man}-L-Thr-[protein] + UDP-alpha-D-glucuronate = 3-O-{beta-D-GlcA-(1-&gt;[3)-alpha-D-Xyl-(1-&gt;3)-beta-D-GlcA-(1-&gt;](n)-4)-beta-D-Xyl-(1-&gt;4)-Rib-ol-P-Rib-ol-P-3-beta-D-GalNAc-(1-&gt;3)-beta-D-GlcNAc-(1-&gt;4)-O-6-P-alpha-D-Man}-L-Thr-[protein] + UDP + H(+). It carries out the reaction 3-O-{beta-D-GlcA-(1-&gt;[3)-alpha-D-Xyl-(1-&gt;3)-beta-D-GlcA-(1-&gt;](n)-4)-beta-D-Xyl-(1-&gt;4)-Rib-ol-P-Rib-ol-P-3-beta-D-GalNAc-(1-&gt;3)-beta-D-GlcNAc-(1-&gt;4)-O-6-P-alpha-D-Man}-L-Thr-[protein] + UDP-alpha-D-xylose = 3-O-{(1-&gt;[3)-alpha-D-Xyl-(1-&gt;3)-beta-D-GlcA-(1-&gt;](n+1)-4)-beta-D-Xyl-(1-&gt;4)-Rib-ol-P-Rib-ol-P-3-beta-D-GalNAc-(1-&gt;3)-beta-D-GlcNAc-(1-&gt;4)-O-6-P-alpha-D-Man}-L-Thr-[protein] + UDP + H(+). The protein operates within protein modification; protein glycosylation. Bifunctional glycosyltransferase with both alpha-1,3-xylosyltransferase and beta-1,3-glucuronyltransferase activities involved in the maturation of alpha-dystroglycan (DAG1) by glycosylation leading to DAG1 binding to laminin G-like domain-containing extracellular proteins with high affinity. Elongates the glucuronyl-beta-1,4-xylose-beta disaccharide primer structure initiated by B4GAT1 by adding repeating units [-3-Xylose-alpha-1,3-GlcA-beta-1-] to produce a heteropolysaccharide. Requires the phosphorylation of core M3 (O-mannosyl trisaccharide) by POMK to elongate the glucuronyl-beta-1,4-xylose-beta disaccharide primer. Plays a key role in skeletal muscle function and regeneration. The polypeptide is Xylosyl- and glucuronyltransferase LARGE1 (Danio rerio (Zebrafish)).